The primary structure comprises 264 residues: 3-methyl-2-oxobutanoate hydroxymethyltransferase (264 aa).

Residues aspartate 45 and aspartate 84 each coordinate Mg(2+). Residues 45–46, aspartate 84, and lysine 112 contribute to the 3-methyl-2-oxobutanoate site; that span reads DS. Glutamate 114 contributes to the Mg(2+) binding site. Catalysis depends on glutamate 181, which acts as the Proton acceptor.

It belongs to the PanB family. In terms of assembly, homodecamer; pentamer of dimers. It depends on Mg(2+) as a cofactor.

It is found in the cytoplasm. It carries out the reaction 3-methyl-2-oxobutanoate + (6R)-5,10-methylene-5,6,7,8-tetrahydrofolate + H2O = 2-dehydropantoate + (6S)-5,6,7,8-tetrahydrofolate. The protein operates within cofactor biosynthesis; (R)-pantothenate biosynthesis; (R)-pantoate from 3-methyl-2-oxobutanoate: step 1/2. In terms of biological role, catalyzes the reversible reaction in which hydroxymethyl group from 5,10-methylenetetrahydrofolate is transferred onto alpha-ketoisovalerate to form ketopantoate. This Shewanella sediminis (strain HAW-EB3) protein is 3-methyl-2-oxobutanoate hydroxymethyltransferase.